We begin with the raw amino-acid sequence, 526 residues long: Cytochrome P450 monooxygenase ucsK (526 aa).

The helical transmembrane segment at 7–27 (PVLAAATAVSFGFYLAGLFVY) threads the bilayer. A glycan (N-linked (GlcNAc...) asparagine) is linked at asparagine 403. A heme-binding site is contributed by cysteine 467.

The protein belongs to the cytochrome P450 family. Heme serves as cofactor.

It localises to the membrane. The protein operates within mycotoxin biosynthesis. In terms of biological role, cytochrome P450 monooxygenase; part of the gene cluster that mediates the biosynthesis of UCS1025A, a member of the pyrrolizidinone family that acts as a strong telomerase inhibitor and displays potent antibacterial and antitumor properties. These compounds share a hemiaminal-containing pyrrolizidinone core fused with a gamma-lactone, giving a furopyrrolizidine that is connected to a decalin fragment. The polyketide synthase module (PKS) of the PKS-NRPS ucsA is responsible for the synthesis of the polyketide backbone via the condensation of an acetyl-CoA starter unit with 6 malonyl-CoA units. The downstream nonribosomal peptide synthetase (NRPS) module then amidates the carboxyl end of the polyketide with a 2S,3S-methylproline derived from L-isoleucine by the 2-oxoglutarate-dependent dioxygenase ucsF which converts L-isoleucine to (4S,5S)-4-methylpyrroline-5-carboxylate that is further converted to 2S,3S-methylproline by the pyrroline-5-carboxylate reductase ucsG. Reductive release of the completed aminoacyl polyketide from the assembly line can form the 3-pyrrolin-2-one structure via an intramolecular Knoevenagel reaction. Because ucsA lacks a designated enoylreductase (ER) domain, the required activity is provided the enoyl reductase ucsL. This keto acyclic precursor is the substrate of the Diels-Alderase ucsH, that catalyzes the Diels-Alder cycloaddition. Oxidation of the 3S-methyl group to a carboxylate by the cytochrome P450 monooxygenase ucsK allows an oxa-Michael cyclization that might involve the reductase/dehydrogenase ucsI and which furnishes the furopyrrolizidine. The oxidase ucsJ likely plays a critical role in stereoselective reduction of the C5-C6 double bond to afford the required R-configured carboxylate group. Further enolization and oxidation at C5 by an unidentified enzyme affords the last intermediate that can undergo oxa-Michael cyclization to yield UCS1025A. This chain is Cytochrome P450 monooxygenase ucsK, found in Acremonium sp.